Here is a 115-residue protein sequence, read N- to C-terminus: Large ribosomal subunit protein bL20c (115 aa).

It belongs to the bacterial ribosomal protein bL20 family.

Its subcellular location is the plastid. The protein resides in the chloroplast. Its function is as follows. Binds directly to 23S ribosomal RNA and is necessary for the in vitro assembly process of the 50S ribosomal subunit. It is not involved in the protein synthesizing functions of that subunit. This chain is Large ribosomal subunit protein bL20c, found in Physcomitrium patens (Spreading-leaved earth moss).